Here is a 162-residue protein sequence, read N- to C-terminus: Catabolic 3-dehydroquinase (162 aa).

Catalysis depends on Tyr-24, which acts as the Proton acceptor. Substrate contacts are provided by Asn-88, His-94, and Asp-101. The Proton donor role is filled by His-114. Residues Val-115 to Ser-116 and Arg-125 contribute to the substrate site.

This sequence belongs to the type-II 3-dehydroquinase family. Homododecamer. Adopts a ring-like structure, composed of an arrangement of two hexameric rings stacked on top of one another.

The catalysed reaction is 3-dehydroquinate = 3-dehydroshikimate + H2O. It functions in the pathway aromatic compound metabolism; 3,4-dihydroxybenzoate biosynthesis; 3,4-dihydroxybenzoate from 3-dehydroquinate: step 1/2. Is involved in the catabolism of quinate. Allows the utilization of quinate as carbon source via the beta-ketoadipate pathway. The polypeptide is Catabolic 3-dehydroquinase (Podospora anserina (strain S / ATCC MYA-4624 / DSM 980 / FGSC 10383) (Pleurage anserina)).